Here is an 84-residue protein sequence, read N- to C-terminus: U4-theraphotoxin-Hhn1a (84 aa).

Residues 1–22 (MKVTLIAILTCAAVLVLHTTAA) form the signal peptide. The propeptide occupies 23 to 47 (EELEESQLMEVGMPDTELAAVDEER). Intrachain disulfides connect cysteine 51-cysteine 65, cysteine 55-cysteine 76, and cysteine 70-cysteine 81.

The protein belongs to the neurotoxin 12 (Hwtx-2) family. 02 (Hwtx-2) subfamily. Expressed by the venom gland.

It localises to the secreted. Postsynaptic neurotoxin. The sequence is that of U4-theraphotoxin-Hhn1a from Cyriopagopus hainanus (Chinese bird spider).